A 373-amino-acid polypeptide reads, in one-letter code: Cyclin-A3-1 (373 aa).

A disordered region spans residues 50-80; that stretch reads AVVLKPQPAPRGGKRAASHAAEPKKPAPPPA.

This sequence belongs to the cyclin family. Cyclin AB subfamily.

In Oryza sativa subsp. japonica (Rice), this protein is Cyclin-A3-1 (CYCA3-1).